A 150-amino-acid chain; its full sequence is Submaxillary gland androgen-regulated protein 2, isoform alpha (150 aa).

An N-terminal signal peptide occupies residues 1-22 (MKALYMVFVLWVLIGCFLSGEC).

It localises to the secreted. Its function is as follows. May play a role in protection or detoxification. The polypeptide is Submaxillary gland androgen-regulated protein 2, isoform alpha (Smr2) (Mus musculus (Mouse)).